A 199-amino-acid chain; its full sequence is UPF0301 protein Daci_1578 (199 aa).

The protein belongs to the UPF0301 (AlgH) family.

This chain is UPF0301 protein Daci_1578, found in Delftia acidovorans (strain DSM 14801 / SPH-1).